Reading from the N-terminus, the 113-residue chain is Hydrogenase maturation factor HypA (113 aa).

Residue His2 participates in Ni(2+) binding. Zn(2+) contacts are provided by Cys73, Cys76, Cys89, and Cys92.

It belongs to the HypA/HybF family.

Its function is as follows. Involved in the maturation of [NiFe] hydrogenases. Required for nickel insertion into the metal center of the hydrogenase. The protein is Hydrogenase maturation factor HypA of Bradyrhizobium sp. (strain ORS 278).